A 364-amino-acid chain; its full sequence is Baseplate tail-tube junction protein gp48 (364 aa).

As to quaternary structure, homohexamer. The tube first annulus is composed of a gp48 hexameric ring. Interacts with gp54. Part of the baseplate macromolecular complex which consists of gp5, gp5.4, gp27 (central spike complex); gp6, gp25, gp53 (inner baseplate); gp7, gp8 (intermediate baseplate); gp9, gp10, gp11, gp12 (peripheral); gp48 and gp54 (proximal region of the tail tube).

The protein localises to the virion. Its function is as follows. Baseplate protein that forms, together with gp54, the baseplate-tail tube junction. The tail tube first 2 annuli are formed by gp48 and gp54, which are in continuation of the spike complex. Involved in the tail assembly. Morphogenesis of the baseplate is completed by association of gp48 and gp54, which bind the upper part of the baseplate dome to form the platform for polymerization of the tail tube. The sequence is that of Baseplate tail-tube junction protein gp48 (48) from Escherichia coli (Bacteriophage T4).